Here is a 160-residue protein sequence, read N- to C-terminus: Urease accessory protein UreE (160 aa).

The protein belongs to the UreE family.

The protein resides in the cytoplasm. Involved in urease metallocenter assembly. Binds nickel. Probably functions as a nickel donor during metallocenter assembly. This Acinetobacter baumannii (strain ACICU) protein is Urease accessory protein UreE.